Consider the following 371-residue polypeptide: MLKFTLHKKDGYARRGTLELNHGKIETPVFMPVGTYGSVKAMNPQNLHDIKAQIILGNTYHLWLRPGLEVIGQFGGLHGFIGWDKPILTDSGGFQVFSLSDMRKLTEEGCTFKSPINGDKLFLSPEISMKIQTVLNSDIAMQLDECTPGEATREQARKSLQMSLRWAERSKKAFEDLKNPNALFGIVQGAMYEDLREESLRGLEQFDFPGLAVGGLSVGEPKPEMYRMLRAVGPILPEHKPHYLMGVGTPEDLVYGVAHGIDMFDCVMPTRNARNGWLFTRFGDLKIKNAKHKLDKRPIDESCTCYACQNFSRAYLHHLHRAGEILGAQLNTIHNLHFYQVIMAEMRDAIEQGKFADWQAQFHENRARGTD.

The Proton acceptor role is filled by D90. Residues 90-94 (DSGGF), D144, Q188, and G215 contribute to the substrate site. The segment at 246–252 (GVGTPED) is RNA binding. D265 acts as the Nucleophile in catalysis. The interval 270 to 274 (TRNAR) is RNA binding; important for wobble base 34 recognition. 4 residues coordinate Zn(2+): C303, C305, C308, and H334.

The protein belongs to the queuine tRNA-ribosyltransferase family. Homodimer. Within each dimer, one monomer is responsible for RNA recognition and catalysis, while the other monomer binds to the replacement base PreQ1. Zn(2+) is required as a cofactor.

The catalysed reaction is 7-aminomethyl-7-carbaguanine + guanosine(34) in tRNA = 7-aminomethyl-7-carbaguanosine(34) in tRNA + guanine. Its pathway is tRNA modification; tRNA-queuosine biosynthesis. Its function is as follows. Catalyzes the base-exchange of a guanine (G) residue with the queuine precursor 7-aminomethyl-7-deazaguanine (PreQ1) at position 34 (anticodon wobble position) in tRNAs with GU(N) anticodons (tRNA-Asp, -Asn, -His and -Tyr). Catalysis occurs through a double-displacement mechanism. The nucleophile active site attacks the C1' of nucleotide 34 to detach the guanine base from the RNA, forming a covalent enzyme-RNA intermediate. The proton acceptor active site deprotonates the incoming PreQ1, allowing a nucleophilic attack on the C1' of the ribose to form the product. After dissociation, two additional enzymatic reactions on the tRNA convert PreQ1 to queuine (Q), resulting in the hypermodified nucleoside queuosine (7-(((4,5-cis-dihydroxy-2-cyclopenten-1-yl)amino)methyl)-7-deazaguanosine). The polypeptide is Queuine tRNA-ribosyltransferase (Neisseria meningitidis serogroup C (strain 053442)).